The chain runs to 139 residues: Transcription antitermination protein NusB (139 aa).

Belongs to the NusB family.

Its function is as follows. Involved in transcription antitermination. Required for transcription of ribosomal RNA (rRNA) genes. Binds specifically to the boxA antiterminator sequence of the ribosomal RNA (rrn) operons. The polypeptide is Transcription antitermination protein NusB (Klebsiella pneumoniae (strain 342)).